We begin with the raw amino-acid sequence, 335 residues long: Ornithine carbamoyltransferase 2, catabolic (335 aa).

Carbamoyl phosphate-binding positions include 62–65 (STRT), Q89, R113, and 140–143 (HPTQ). L-ornithine contacts are provided by residues N172, D236, and 240–241 (SM). Carbamoyl phosphate-binding positions include 277–278 (CL) and R322.

It belongs to the aspartate/ornithine carbamoyltransferase superfamily. OTCase family.

Its subcellular location is the cytoplasm. The enzyme catalyses carbamoyl phosphate + L-ornithine = L-citrulline + phosphate + H(+). It participates in amino-acid degradation; L-arginine degradation via ADI pathway; carbamoyl phosphate from L-arginine: step 2/2. Its function is as follows. Reversibly catalyzes the transfer of the carbamoyl group from carbamoyl phosphate (CP) to the N(epsilon) atom of ornithine (ORN) to produce L-citrulline. This chain is Ornithine carbamoyltransferase 2, catabolic (arcB2), found in Staphylococcus epidermidis (strain ATCC 12228 / FDA PCI 1200).